Consider the following 438-residue polypeptide: MSAPRVSFVSLGCPKALVDSERIITGLRSEGYEISRKHDGADLVIVNTCGFLDSARDESLEAIGLALNENGKVIVTGCLGAEPDVIRERHPNVLAITGPQAYESVMNAVHEVAPPPPHDPFVDLVPPQGVKLTPRHYAYLKISEGCSNRCSFCIIPALRGDLVSRPINEVLREAEKLVQAGVKEILVISQDTSAYGLDIKYQEAMWQDRTVRTKFLDLSRELGEMGVWVRMHYVYPYPHVDEVIPLMAEGKILPYLDIPFQHASPAVLKNMRRPAHQEKTSRRIQAWRETCPDLAVRSTFIVGYPGETEEDFQMLLDWLDEAKIERAGCFKYEAVKGAKANDLGLEQVPEEVKEARWHRFMAKQQQISTNLLKKKVGKRLPVIIDEANGTIGKGRTRYDAPEIDGSVHISSRRPLRVGDIVTVKIEASDAYDLHGTAV.

An MTTase N-terminal domain is found at P4–P114. Positions 13, 49, 78, 146, 150, and 153 each coordinate [4Fe-4S] cluster. The 239-residue stretch at L132 to N370 folds into the Radical SAM core domain. In terms of domain architecture, TRAM spans K373–V438.

This sequence belongs to the methylthiotransferase family. RimO subfamily. Requires [4Fe-4S] cluster as cofactor.

The protein resides in the cytoplasm. The enzyme catalyses L-aspartate(89)-[ribosomal protein uS12]-hydrogen + (sulfur carrier)-SH + AH2 + 2 S-adenosyl-L-methionine = 3-methylsulfanyl-L-aspartate(89)-[ribosomal protein uS12]-hydrogen + (sulfur carrier)-H + 5'-deoxyadenosine + L-methionine + A + S-adenosyl-L-homocysteine + 2 H(+). Its function is as follows. Catalyzes the methylthiolation of an aspartic acid residue of ribosomal protein uS12. This chain is Ribosomal protein uS12 methylthiotransferase RimO, found in Brucella ovis (strain ATCC 25840 / 63/290 / NCTC 10512).